The following is a 222-amino-acid chain: Ethylene-inducing xylanase 2 (222 aa).

Positions 1–19 (MITFSSLLVTFSAISTSLA) are cleaved as a signal peptide. The GH11 domain maps to 36–222 (QRNESSLVRR…GEGAATQTVS (187 aa)). Residues N38 and N94 are each glycosylated (N-linked (GlcNAc...) asparagine). Residue E120 is the Nucleophile of the active site. E209 acts as the Proton donor in catalysis.

It belongs to the glycosyl hydrolase 11 (cellulase G) family.

The enzyme catalyses Endohydrolysis of (1-&gt;4)-beta-D-xylosidic linkages in xylans.. The protein operates within glycan degradation; xylan degradation. Its function is as follows. Endo-1,4-beta-xylanase involved in the hydrolysis of xylan, a major structural heterogeneous polysaccharide found in plant biomass representing the second most abundant polysaccharide in the biosphere, after cellulose. May act as an elicitor of plant defense responses in certain plants but does not exhibit any cell death when transiently expressed in N.benthamiana. The protein is Ethylene-inducing xylanase 2 of Botryotinia fuckeliana (strain B05.10) (Noble rot fungus).